The primary structure comprises 172 residues: Adenine phosphoribosyltransferase (172 aa).

Belongs to the purine/pyrimidine phosphoribosyltransferase family. As to quaternary structure, homodimer.

The protein resides in the cytoplasm. It carries out the reaction AMP + diphosphate = 5-phospho-alpha-D-ribose 1-diphosphate + adenine. Its pathway is purine metabolism; AMP biosynthesis via salvage pathway; AMP from adenine: step 1/1. Catalyzes a salvage reaction resulting in the formation of AMP, that is energically less costly than de novo synthesis. The protein is Adenine phosphoribosyltransferase of Microcystis aeruginosa (strain NIES-843 / IAM M-2473).